The chain runs to 859 residues: Leucine--tRNA ligase (859 aa).

The 'HIGH' region signature appears at 43 to 53 (PYPSGRIHMGH). The 'KMSKS' region motif lies at 614–618 (KMSKS). Residue K617 participates in ATP binding.

The protein belongs to the class-I aminoacyl-tRNA synthetase family.

Its subcellular location is the cytoplasm. It catalyses the reaction tRNA(Leu) + L-leucine + ATP = L-leucyl-tRNA(Leu) + AMP + diphosphate. The polypeptide is Leucine--tRNA ligase (Magnetococcus marinus (strain ATCC BAA-1437 / JCM 17883 / MC-1)).